We begin with the raw amino-acid sequence, 478 residues long: PRAME family member 26 (478 aa).

The stretch at 99 to 126 is one LRR 1; degenerate repeat; sequence RWKLQVLDLQDVCENFWMVWSEAMARGC. One copy of the LRR 2; degenerate repeat lies at 181 to 205; the sequence is HLCCKKLKILGMPFRNIRSILKMVN. Residues 206–232 form an LRR 3; degenerate repeat; that stretch reads LDCIQEVEVNCKWVLPILTQFTPYLGH. One copy of the LRR 4; degenerate repeat lies at 233–268; it reads MRNLQKLVLSHMDVSRYVSPEQKKEIVTQFTTQFLK. 5 LRR repeats span residues 269 to 294, 295 to 326, 327 to 347, 351 to 378, and 379 to 403; these read LHCL…LSCL, KTSL…SQLK, TLDL…QILL, AATL…ALSR, and CFEL…LLSH.

This sequence belongs to the PRAME family.

This is PRAME family member 26 from Homo sapiens (Human).